A 160-amino-acid chain; its full sequence is Cytochrome b6-f complex subunit 4 (160 aa).

A run of 3 helical transmembrane segments spans residues 36-56, 95-115, and 131-151; these read LLYI…GLAV, LLGV…PFLE, and TVFL…TLPI.

This sequence belongs to the cytochrome b family. PetD subfamily. The 4 large subunits of the cytochrome b6-f complex are cytochrome b6, subunit IV (17 kDa polypeptide, petD), cytochrome f and the Rieske protein, while the 4 small subunits are petG, petL, petM and petN. The complex functions as a dimer.

The protein resides in the plastid. It localises to the chloroplast thylakoid membrane. Its function is as follows. Component of the cytochrome b6-f complex, which mediates electron transfer between photosystem II (PSII) and photosystem I (PSI), cyclic electron flow around PSI, and state transitions. In Oryza sativa (Rice), this protein is Cytochrome b6-f complex subunit 4.